The sequence spans 305 residues: ATP synthase gamma chain (305 aa).

The protein belongs to the ATPase gamma chain family. F-type ATPases have 2 components, CF(1) - the catalytic core - and CF(0) - the membrane proton channel. CF(1) has five subunits: alpha(3), beta(3), gamma(1), delta(1), epsilon(1). CF(0) has three main subunits: a, b and c.

It is found in the cell membrane. In terms of biological role, produces ATP from ADP in the presence of a proton gradient across the membrane. The gamma chain is believed to be important in regulating ATPase activity and the flow of protons through the CF(0) complex. The polypeptide is ATP synthase gamma chain (Streptomyces coelicolor (strain ATCC BAA-471 / A3(2) / M145)).